Reading from the N-terminus, the 577-residue chain is Alpha-1,2-mannosyltransferase alg9 (577 aa).

The first 29 residues, 1 to 29 (MPSKAPRKSLSVSFVWTFSILAVLRLTSA), serve as a signal peptide directing secretion. Residues 30 to 68 (SFRVIDDCDEVYNYWEPLHYLLYGYGLQTWEYSPEYAIR) are Extracellular-facing. Residues 69 to 89 (SWFYIALHAVPGFLARGLGLS) form a helical membrane-spanning segment. The Cytoplasmic segment spans residues 90 to 95 (RLHVFY). The chain crosses the membrane as a helical span at residues 96-116 (FIRGVLACFSAFCETNLILAV). Over 117-136 (ARNFNRAVALHLTSVLFVNS) the chain is Extracellular. The chain crosses the membrane as a helical span at residues 137–159 (GMWSASTSFLPSSFAMNMVTLAL). The Cytoplasmic portion of the chain corresponds to 160 to 176 (SAQLSPPSTKRTVKVVS). The chain crosses the membrane as a helical span at residues 177–197 (FITIGAVIGWPFSAALSIPFI). At 198–217 (LLELVDLKGRFRHLFCRWFK) the chain is on the extracellular side. Residues 218 to 238 (AIFVALLITGICITVDSLFYH) form a helical membrane-spanning segment. At 239–280 (RIQFVAWNIVKYNVLAKDGRGPDIYGTEPWWYYFANLSLQHN) the chain is on the cytoplasmic side. Residues 281–301 (IVLWFAMACGPLVLLAAFTNW) traverse the membrane as a helical segment. Residues 302–305 (INLD) are Extracellular-facing. Residues 306-326 (SFLDLSSVISPFYIWLFIFII) form a helical membrane-spanning segment. The Cytoplasmic portion of the chain corresponds to 327–333 (QPHKEER). The chain crosses the membrane as a helical span at residues 334–354 (FMYPIYPVLCLAAAIGLDMSL). Residues 355–375 (KLMIQILSSINETVRSKFPVR) lie on the Extracellular side of the membrane. Residues 376–396 (FVVLCVYAIIGCLSIARILAI) traverse the membrane as a helical segment. Residues 397–577 (QNYNAPMIIY…NLRRASKQQA (181 aa)) lie on the Cytoplasmic side of the membrane.

This sequence belongs to the glycosyltransferase 22 family.

Its subcellular location is the endoplasmic reticulum membrane. The catalysed reaction is an alpha-D-Man-(1-&gt;2)-alpha-D-Man-(1-&gt;2)-alpha-D-Man-(1-&gt;3)-[alpha-D-Man-(1-&gt;3)-alpha-D-Man-(1-&gt;6)]-beta-D-Man-(1-&gt;4)-beta-D-GlcNAc-(1-&gt;4)-alpha-D-GlcNAc-diphospho-di-trans,poly-cis-dolichol + a di-trans,poly-cis-dolichyl beta-D-mannosyl phosphate = an alpha-D-Man-(1-&gt;2)-alpha-D-Man-(1-&gt;2)-alpha-D-Man-(1-&gt;3)-[alpha-D-Man-(1-&gt;2)-alpha-D-Man-(1-&gt;3)-alpha-D-Man-(1-&gt;6)]-beta-D-Man-(1-&gt;4)-beta-D-GlcNAc-(1-&gt;4)-alpha-D-GlcNAc-diphospho-di-trans,poly-cis-dolichol + a di-trans,poly-cis-dolichyl phosphate + H(+). The enzyme catalyses an alpha-D-Man-(1-&gt;2)-alpha-D-Man-(1-&gt;2)-alpha-D-Man-(1-&gt;3)-[alpha-D-Man-(1-&gt;2)-alpha-D-Man-(1-&gt;3)-[alpha-D-Man-(1-&gt;6)]-alpha-D-Man-(1-&gt;6)]-beta-D-Man-(1-&gt;4)-beta-D-GlcNAc-(1-&gt;4)-alpha-D-GlcNAc-diphospho-di-trans,poly-cis-dolichol + a di-trans,poly-cis-dolichyl beta-D-mannosyl phosphate = an alpha-D-Man-(1-&gt;2)-alpha-D-Man-(1-&gt;2)-alpha-D-Man-(1-&gt;3)-[alpha-D-Man-(1-&gt;2)-alpha-D-Man-(1-&gt;3)-[alpha-D-Man-(1-&gt;2)-alpha-D-Man-(1-&gt;6)]-alpha-D-Man-(1-&gt;6)]-beta-D-Man-(1-&gt;4)-beta-D-GlcNAc-(1-&gt;4)-alpha-D-GlcNAc-diphospho-di-trans,poly-cis-dolichol + a di-trans,poly-cis-dolichyl phosphate + H(+). The protein operates within protein modification; protein glycosylation. Functionally, catalyzes the transfer of mannose from Dol-P-Man to lipid-linked oligosaccharides. The polypeptide is Alpha-1,2-mannosyltransferase alg9 (alg9) (Schizosaccharomyces pombe (strain 972 / ATCC 24843) (Fission yeast)).